Here is a 649-residue protein sequence, read N- to C-terminus: Stress-70 protein, mitochondrial (649 aa).

Residues 1-46 (MISASRAAAARLVGAAASRGPTAARHKDGWNGLSHEAFRIVSRRDY) constitute a mitochondrion transit peptide. Positions 1–432 (MISASRAAAA…IQGGVLAGDV (432 aa)) are interaction with NFS1. ADP-binding residues include Thr-63 and Asn-64. Residues 63–431 (TNSCVAVMEG…AIQGGVLAGD (369 aa)) form a nucleotide-binding domain (NBD) region. Residue Lys-76 is modified to N6-acetyllysine. The residue at position 87 (Thr-87) is a Phosphothreonine. Lys-135 and Lys-138 each carry N6-acetyllysine; alternate. An N6-succinyllysine; alternate mark is found at Lys-135 and Lys-138. Lys-143 bears the N6-acetyllysine mark. Lys-206 carries the N6-acetyllysine; alternate modification. Lys-206 is subject to N6-succinyllysine; alternate. Lys-206 carries the N6-malonyllysine; alternate modification. Lys-234 and Lys-288 each carry N6-acetyllysine. Residue Lys-300 is modified to N6-acetyllysine; alternate. Lys-300 carries the post-translational modification N6-succinyllysine; alternate. ADP is bound by residues Glu-313, Lys-316, and Ser-320. Lys-368 is subject to N6-succinyllysine. Residues Gly-388 and Arg-391 each contribute to the ADP site. The residue at position 394 (Lys-394) is an N6-succinyllysine. The residue at position 408 (Ser-408) is a Phosphoserine. The tract at residues 432 to 441 (VTDVLLLDVT) is interdomain linker. Lys-565, Lys-598, and Lys-638 each carry N6-acetyllysine; alternate. N6-succinyllysine; alternate is present on residues Lys-565, Lys-598, and Lys-638.

It belongs to the heat shock protein 70 family. In terms of assembly, interacts strongly with the intermediate form of FXN and weakly with its mature form. Interacts with HSCB. Associates with the mitochondrial contact site and cristae organizing system (MICOS) complex, composed of at least MICOS10/MIC10, CHCHD3/MIC19, CHCHD6/MIC25, APOOL/MIC27, IMMT/MIC60, APOO/MIC23/MIC26 and QIL1/MIC13. This complex was also known under the names MINOS or MitOS complex. The MICOS complex associates with mitochondrial outer membrane proteins SAMM50, MTX1, MTX2 and DNAJC11, mitochondrial inner membrane protein TMEM11 and with HSPA9. Interacts with DNLZ, the interaction is required to prevent self-aggregation. Interacts with TESPA1. Interacts with PDPN. Interacts with NFU1, NFS1 and ISCU. Interacts with TP53; the interaction promotes TP53 degradation. Interacts (via SBD domain) with UBXN2A; the interaction with UBXN2A inhibits HSPA9/MOT-2 interaction with and degradation of TP53, thereby promotes TP53 translocation to the nucleus. Interacts with ITPR1 AND VDAC1; this interaction couples ITPR1 to VDAC1. Component of the TIM23 mitochondrial inner membrane pre-sequence translocase complex.

It localises to the mitochondrion. It is found in the nucleus. The protein localises to the nucleolus. The protein resides in the cytoplasm. Its subcellular location is the mitochondrion matrix. The catalysed reaction is ATP + H2O = ADP + phosphate + H(+). With respect to regulation, the chaperone activity is regulated by ATP-induced allosteric coupling of the nucleotide-binding (NBD) and substrate-binding (SBD) domains. ATP binding in the NBD leads to a conformational change in the NBD, which is transferred through the interdomain linker (IDL) to the substrate-binding domain (SBD). This elicits a reduced substrate affinity and a faster substrate exchange rate. Upon hydrolysis of ATP to ADP, the protein undergoes a conformational change that increases its affinity for substrate proteins. It cycles through repeated phases of ATP hydrolysis and nucleotide exchange, facilitating repeated cycles of substrate binding and release. Functions in collaboration with co-chaperones. Functions with the co-chaperone, DNLZ, to maintain solubility and regulate ATP hydrolysis. Nucleotide exchange factors, GRPEL1 and GRPEL2, accelerate nucleotide exchange. In terms of biological role, mitochondrial chaperone that plays a key role in mitochondrial protein import, folding, and assembly. Plays an essential role in the protein quality control system, the correct folding of proteins, the re-folding of misfolded proteins, and the targeting of proteins for subsequent degradation. These processes are achieved through cycles of ATP binding, ATP hydrolysis, and ADP release, mediated by co-chaperones. In mitochondria, it associates with the TIM (translocase of the inner membrane) protein complex to assist in the import and folding of mitochondrial proteins. Plays an important role in mitochondrial iron-sulfur cluster (ISC) biogenesis, interacts with and stabilizes ISC cluster assembly proteins FXN, NFU1, NFS1 and ISCU. Regulates erythropoiesis via stabilization of ISC assembly. Regulates mitochondrial calcium-dependent apoptosis by coupling two calcium channels, ITPR1 and VDAC1, at the mitochondria-associated endoplasmic reticulum (ER) membrane to facilitate calcium transport from the ER lumen to the mitochondria intermembrane space, providing calcium for the downstream calcium channel MCU, which releases it into the mitochondrial matrix. Although primarily located in the mitochondria, it is also found in other cellular compartments. In the cytosol, it associates with proteins involved in signaling, apoptosis, or senescence. It may play a role in cell cycle regulation via its interaction with and promotion of degradation of TP53. May play a role in the control of cell proliferation and cellular aging. Protects against reactive oxygen species (ROS). Extracellular HSPA9 plays a cytoprotective role by preventing cell lysis following immune attack by the membrane attack complex by disrupting formation of the complex. The polypeptide is Stress-70 protein, mitochondrial (Canis lupus familiaris (Dog)).